The primary structure comprises 61 residues: Large ribosomal subunit protein uL30 (61 aa).

This sequence belongs to the universal ribosomal protein uL30 family. Part of the 50S ribosomal subunit.

In Nitrosomonas europaea (strain ATCC 19718 / CIP 103999 / KCTC 2705 / NBRC 14298), this protein is Large ribosomal subunit protein uL30.